A 160-amino-acid polypeptide reads, in one-letter code: Phosphopantetheine adenylyltransferase (160 aa).

Thr-11 provides a ligand contact to substrate. ATP-binding positions include 11-12 and His-19; that span reads TF. Lys-43, Leu-75, and Arg-89 together coordinate substrate. ATP contacts are provided by residues 90 to 92, Glu-100, and 125 to 131; these read GLR and HMFVSAS.

This sequence belongs to the bacterial CoaD family. In terms of assembly, homohexamer. It depends on Mg(2+) as a cofactor.

It localises to the cytoplasm. It carries out the reaction (R)-4'-phosphopantetheine + ATP + H(+) = 3'-dephospho-CoA + diphosphate. The protein operates within cofactor biosynthesis; coenzyme A biosynthesis; CoA from (R)-pantothenate: step 4/5. Its function is as follows. Reversibly transfers an adenylyl group from ATP to 4'-phosphopantetheine, yielding dephospho-CoA (dPCoA) and pyrophosphate. The protein is Phosphopantetheine adenylyltransferase of Methylobacillus flagellatus (strain ATCC 51484 / DSM 6875 / VKM B-1610 / KT).